The primary structure comprises 209 residues: Mitochondrial import inner membrane translocase subunit Tim23 (209 aa).

Helical transmembrane passes span 73-93 (FELA…FGAM), 125-145 (ALWA…GVII), and 172-194 (GGLR…YALY).

It belongs to the Tim17/Tim22/Tim23 family. Component of the TIM23 complex at least composed of TIMM23, TIMM17 (TIMM17A or TIMM17B) and TIMM50; within this complex, directly interacts with TIMM50. The complex interacts with the TIMM44 component of the PAM complex and with DNAJC15. Upon mitochondrial depolarization, interacts with PINK1; the interaction is required for PINK1 accumulation at the outer mitochondrial membrane, kinase activation by autophosphorylation and PRKN recruitement to mitochondria.

The protein resides in the mitochondrion inner membrane. Functionally, essential component of the TIM23 complex, a complex that mediates the translocation of transit peptide-containing proteins across the mitochondrial inner membrane. Has a role in the activation of stress-induced mitophagy by protecting PINK1 from OMA1-mediated degradation and facilitating its accumulation at the outer mitochondrial membrane in response to depolarization. The sequence is that of Mitochondrial import inner membrane translocase subunit Tim23 (TIMM23) from Bos taurus (Bovine).